The primary structure comprises 229 residues: Probable methylthioribulose-1-phosphate dehydratase (229 aa).

Cys-97 is a binding site for substrate. Positions 115 and 117 each coordinate Zn(2+). The active-site Proton donor/acceptor is Glu-139. His-195 contacts Zn(2+).

Belongs to the aldolase class II family. MtnB subfamily. Zn(2+) is required as a cofactor.

It is found in the cytoplasm. The catalysed reaction is 5-(methylsulfanyl)-D-ribulose 1-phosphate = 5-methylsulfanyl-2,3-dioxopentyl phosphate + H2O. It functions in the pathway amino-acid biosynthesis; L-methionine biosynthesis via salvage pathway; L-methionine from S-methyl-5-thio-alpha-D-ribose 1-phosphate: step 2/6. Its function is as follows. Catalyzes the dehydration of methylthioribulose-1-phosphate (MTRu-1-P) into 2,3-diketo-5-methylthiopentyl-1-phosphate (DK-MTP-1-P). The chain is Probable methylthioribulose-1-phosphate dehydratase from Acyrthosiphon pisum (Pea aphid).